The following is a 371-amino-acid chain: Fructose-1,6-bisphosphatase class 1 1 (371 aa).

4 residues coordinate Mg(2+): Glu115, Asp134, Leu136, and Asp137. Substrate-binding positions include 137-140 (DGSS), Asn228, and 280-282 (YLY). A Mg(2+)-binding site is contributed by Glu300.

This sequence belongs to the FBPase class 1 family. Homotetramer. Mg(2+) is required as a cofactor.

The protein resides in the cytoplasm. The catalysed reaction is beta-D-fructose 1,6-bisphosphate + H2O = beta-D-fructose 6-phosphate + phosphate. It participates in carbohydrate biosynthesis; gluconeogenesis. The sequence is that of Fructose-1,6-bisphosphatase class 1 1 from Xanthobacter autotrophicus (strain ATCC BAA-1158 / Py2).